Reading from the N-terminus, the 421-residue chain is Mannose-1-phosphate guanylyltransferase regulatory subunit alpha (421 aa).

Residues 2 to 252 (LKAVILIGGP…EGCWSQIKSA (251 aa)) form a substrate-binding domain region. GDP-alpha-D-mannose contacts are provided by Glu85 and Gln248. The tract at residues 274 to 421 (LASTKEGGPT…SRSFKNQIIL (148 aa)) is hexapeptide repeat domain. The interval 357–385 (TPSDPNPNDPYSKIDSETLFREGKLTPSI) is C-loop.

This sequence belongs to the transferase hexapeptide repeat family. As to quaternary structure, component of the GMPPA-GMPPB mannose-1-phosphate guanylyltransferase complex composed of 4 gmppa subunits and 8 gmppb subunits; the complex is organized into three layers, a central layer made up of 2 gmppa dimers sandwiched between two layers each made up of 2 gmppb dimers.

Its subcellular location is the cytoplasm. Functionally, regulatory subunit of the GMPPA-GMPPB mannose-1-phosphate guanylyltransferase complex; reduces the catalytic activity of GMPPB when part of the complex. Mediates allosteric feedback inhibition of GMPPB catalytic activity upon binding GDP-alpha-D-mannose. Together with GMPPB regulates GDP-alpha-D-mannose levels. This Xenopus tropicalis (Western clawed frog) protein is Mannose-1-phosphate guanylyltransferase regulatory subunit alpha (gmppa).